The chain runs to 128 residues: Large ribosomal subunit protein bL21 (128 aa).

The tract at residues 104 to 128 (GKSPSVGPRPKRVKAEPAPAADAAE) is disordered. A compositionally biased stretch (low complexity) spans 119-128 (EPAPAADAAE).

It belongs to the bacterial ribosomal protein bL21 family. Part of the 50S ribosomal subunit. Contacts protein L20.

Its function is as follows. This protein binds to 23S rRNA in the presence of protein L20. The polypeptide is Large ribosomal subunit protein bL21 (Rhodopseudomonas palustris (strain HaA2)).